Reading from the N-terminus, the 229-residue chain is Apoptosis regulator Bcl-2 (229 aa).

Positions Asp-10–Trp-30 match the BH4 motif. The disordered stretch occupies residues Trp-30 to Val-82. Residues Gly-33 to Arg-61 show a composition bias toward low complexity. Thr-62 is modified (phosphothreonine; by MAPK8). Pro residues predominate over residues Thr-62–Pro-81. Phosphoserine; by MAPK8 and PKC is present on Ser-63. The residue at position 77 (Ser-77) is a Phosphoserine; by MAPK8. Positions Val-83–Arg-97 match the BH3 motif. A BH1 motif is present at residues Glu-126–Gly-145. A BH2 motif is present at residues Thr-177 to Tyr-192. A helical transmembrane segment spans residues Phe-202 to Gly-223.

The protein belongs to the Bcl-2 family. As to quaternary structure, forms homodimers, and heterodimers with BAX, BAD, BAK and Bcl-X(L). Heterodimerization with BAX requires intact BH1 and BH2 motifs, and is necessary for anti-apoptotic activity. Component of the complex, at least composed of LRPPRC, BECN1 and BCL2; the interactions prevent BECN1 from forming an autophagy-inducing complex with PIK3C3. Interacts with EI24. Also interacts with APAF1, BBC3, BCL2L1, BNIPL, MRPL41 and TP53BP2. Binding to FKBP8 seems to target BCL2 to the mitochondria and probably interferes with the binding of BCL2 to its targets. Interacts with BAG1 in an ATP-dependent manner. Interacts with RAF1 (the 'Ser-338' and 'Ser-339' phosphorylated form). Interacts (via the BH4 domain) with EGLN3; the interaction prevents the formation of the BAX-BCL2 complex and inhibits the anti-apoptotic activity of BCL2. Interacts with G0S2; this interaction also prevents the formation of the anti-apoptotic BAX-BCL2 complex. Interacts with RTL10/BOP. Interacts with the SCF(FBXO10) complex. Interacts (via the loop between motifs BH4 and BH3) with NLRP1 (via LRR repeats), but not with NLRP2, NLRP3, NLRP4, PYCARD, nor MEFV. Interacts with GIMAP3/IAN4, GIMAP4/IAN1 and GIMAP5/IAN5. Interacts with BCAP31. Interacts with IRF3; the interaction is inhibited by Sendai virus infection. Interacts with BECN1; thereby inhibiting autophagy in non-starvation conditions. Interacts with AMBRA1; thereby inhibiting autophagy. Post-translationally, phosphorylation/dephosphorylation on Ser-63 regulates anti-apoptotic activity. Growth factor-stimulated phosphorylation on Ser-63 by PKC is required for the anti-apoptosis activity and occurs during the G2/M phase of the cell cycle. In the absence of growth factors, BCL2 appears to be phosphorylated by other protein kinases such as ERKs and stress-activated kinases. Phosphorylated by MAPK8/JNK1 at Thr-62, Ser-63 and Ser-77, which stimulates starvation-induced autophagy. Dephosphorylated by protein phosphatase 2A (PP2A). Proteolytically cleaved by caspases during apoptosis. The cleaved protein, lacking the BH4 motif, has pro-apoptotic activity, causes the release of cytochrome c into the cytosol promoting further caspase activity. In terms of processing, monoubiquitinated by PRKN, leading to an increase in its stability. Ubiquitinated by SCF(FBXO10), leading to its degradation by the proteasome.

Its subcellular location is the mitochondrion outer membrane. It localises to the nucleus membrane. It is found in the endoplasmic reticulum membrane. The protein localises to the cytoplasm. Functionally, suppresses apoptosis in a variety of cell systems including factor-dependent lymphohematopoietic and neural cells. Regulates cell death by controlling the mitochondrial membrane permeability. Appears to function in a feedback loop system with caspases. Inhibits caspase activity either by preventing the release of cytochrome c from the mitochondria and/or by binding to the apoptosis-activating factor (APAF-1). Also acts as an inhibitor of autophagy: interacts with BECN1 and AMBRA1 during non-starvation conditions and inhibits their autophagy function. May attenuate inflammation by impairing NLRP1-inflammasome activation, hence CASP1 activation and IL1B release. This is Apoptosis regulator Bcl-2 (BCL2) from Bos taurus (Bovine).